Here is a 357-residue protein sequence, read N- to C-terminus: Protein RecA (357 aa).

ATP is bound at residue 79-86 (GPESSGKT).

It belongs to the RecA family.

It is found in the cytoplasm. In terms of biological role, can catalyze the hydrolysis of ATP in the presence of single-stranded DNA, the ATP-dependent uptake of single-stranded DNA by duplex DNA, and the ATP-dependent hybridization of homologous single-stranded DNAs. It interacts with LexA causing its activation and leading to its autocatalytic cleavage. The protein is Protein RecA of Chloroherpeton thalassium (strain ATCC 35110 / GB-78).